The chain runs to 129 residues: Small ribosomal subunit protein uS11 (129 aa).

The protein belongs to the universal ribosomal protein uS11 family. As to quaternary structure, part of the 30S ribosomal subunit. Interacts with proteins S7 and S18. Binds to IF-3.

Located on the platform of the 30S subunit, it bridges several disparate RNA helices of the 16S rRNA. Forms part of the Shine-Dalgarno cleft in the 70S ribosome. This Tolumonas auensis (strain DSM 9187 / NBRC 110442 / TA 4) protein is Small ribosomal subunit protein uS11.